The sequence spans 326 residues: Beta-1,3-galactosyltransferase 1 (326 aa).

Over M1–S6 the chain is Cytoplasmic. The chain crosses the membrane as a helical; Signal-anchor for type II membrane protein span at residues C7 to T26. The Lumenal segment spans residues R27–C326. Residues N47 and N151 are each glycosylated (N-linked (GlcNAc...) asparagine).

It belongs to the glycosyltransferase 31 family. It depends on Mn(2+) as a cofactor.

The protein resides in the golgi apparatus membrane. It catalyses the reaction an N-acetyl-beta-D-glucosaminyl derivative + UDP-alpha-D-galactose = a beta-D-galactosyl-(1-&gt;3)-N-acetyl-beta-D-glucosaminyl derivative + UDP + H(+). The enzyme catalyses a beta-D-GlcNAc-(1-&gt;3)-beta-D-Gal-(1-&gt;4)-beta-D-Glc-(1&lt;-&gt;1)-Cer(d18:1(4E)) + UDP-alpha-D-galactose = a beta-D-Gal-(1-&gt;3)-beta-D-GlcNAc-(1-&gt;3)-beta-D-Gal-(1-&gt;4)-beta-D-Glc-(1&lt;-&gt;1')-Cer(d18:1(4E)) + UDP + H(+). It participates in protein modification; protein glycosylation. Beta-1,3-galactosyltransferase that transfers galactose from UDP-galactose to substrates with a terminal beta-N-acetylglucosamine (beta-GlcNAc) residue. Involved in the biosynthesis of the carbohydrate moieties of glycolipids and glycoproteins. The protein is Beta-1,3-galactosyltransferase 1 (B3GALT1) of Gorilla gorilla gorilla (Western lowland gorilla).